The following is a 264-amino-acid chain: tRNA (guanine-N(1)-)-methyltransferase (264 aa).

Residues Gly125 and Leu145–Leu150 each bind S-adenosyl-L-methionine.

The protein belongs to the RNA methyltransferase TrmD family. In terms of assembly, homodimer.

The protein localises to the cytoplasm. It catalyses the reaction guanosine(37) in tRNA + S-adenosyl-L-methionine = N(1)-methylguanosine(37) in tRNA + S-adenosyl-L-homocysteine + H(+). Functionally, specifically methylates guanosine-37 in various tRNAs. The protein is tRNA (guanine-N(1)-)-methyltransferase of Burkholderia multivorans (strain ATCC 17616 / 249).